Consider the following 820-residue polypeptide: Trimethylamine-N-oxide reductase (820 aa).

A signal peptide (tat-type signal) is located at residues 1 to 33 (MAITRRSFLKGVATTSAASIIGPSLLTSVSAQA). Ser179 is a Mo-bis(molybdopterin guanine dinucleotide) binding site.

Belongs to the prokaryotic molybdopterin-containing oxidoreductase family. Requires Mo-bis(molybdopterin guanine dinucleotide) as cofactor. Post-translationally, predicted to be exported by the Tat system. The position of the signal peptide cleavage has not been experimentally proven.

It localises to the periplasm. It catalyses the reaction trimethylamine + 2 Fe(III)-[cytochrome c] + H2O = trimethylamine N-oxide + 2 Fe(II)-[cytochrome c] + 3 H(+). Its function is as follows. Reduces trimethylamine-N-oxide (TMAO) into trimethylamine; an anaerobic reaction coupled to energy-yielding reactions. The sequence is that of Trimethylamine-N-oxide reductase (torA) from Vibrio cholerae serotype O1 (strain ATCC 39315 / El Tor Inaba N16961).